The sequence spans 78 residues: MNRTKLVLGAVILGSTLLAGCSSNAKIDQLSSDVQTLNAKVDQLSNDVNAIRSDVQAAKDDAARANQRLDNQVRTYKK.

The N-terminal stretch at 1–20 is a signal peptide; the sequence is MNRTKLVLGAVILGSTLLAG. A lipid anchor (N-palmitoyl cysteine) is attached at Cys-21. Cys-21 carries S-diacylglycerol cysteine lipidation. 2 consecutive repeats follow at residues 24–34 and 38–48; these read NAKIDQLSSDV and NAKVDQLSNDV. The stretch at 27-75 forms a coiled coil; the sequence is IDQLSSDVQTLNAKVDQLSNDVNAIRSDVQAAKDDAARANQRLDNQVRT. At Lys-78 the chain carries N6-murein peptidoglycan lysine.

It belongs to the Lpp family. In terms of assembly, homotrimer.

The protein resides in the cell outer membrane. The protein localises to the secreted. Its subcellular location is the cell wall. A highly abundant outer membrane lipoprotein that controls the distance between the inner and outer membranes. The only protein known to be covalently linked to the peptidoglycan network (PGN). Also non-covalently binds the PGN. The link between the cell outer membrane and PGN contributes to maintenance of the structural and functional integrity of the cell envelope, and maintains the correct distance between the PGN and the outer membrane. The polypeptide is Major outer membrane lipoprotein Lpp (Pectobacterium atrosepticum (strain SCRI 1043 / ATCC BAA-672) (Erwinia carotovora subsp. atroseptica)).